A 335-amino-acid chain; its full sequence is Phosphate acyltransferase (335 aa).

The protein belongs to the PlsX family. Homodimer. Probably interacts with PlsY.

The protein localises to the cytoplasm. It carries out the reaction a fatty acyl-[ACP] + phosphate = an acyl phosphate + holo-[ACP]. It functions in the pathway lipid metabolism; phospholipid metabolism. Its function is as follows. Catalyzes the reversible formation of acyl-phosphate (acyl-PO(4)) from acyl-[acyl-carrier-protein] (acyl-ACP). This enzyme utilizes acyl-ACP as fatty acyl donor, but not acyl-CoA. This is Phosphate acyltransferase from Clostridium botulinum (strain Langeland / NCTC 10281 / Type F).